A 289-amino-acid chain; its full sequence is Phosphatidylserine decarboxylase proenzyme (289 aa).

Catalysis depends on charge relay system; for autoendoproteolytic cleavage activity residues D92, H149, and S254. S254 serves as the catalytic Schiff-base intermediate with substrate; via pyruvic acid; for decarboxylase activity. S254 carries the post-translational modification Pyruvic acid (Ser); by autocatalysis.

Belongs to the phosphatidylserine decarboxylase family. PSD-B subfamily. Prokaryotic type I sub-subfamily. Heterodimer of a large membrane-associated beta subunit and a small pyruvoyl-containing alpha subunit. Requires pyruvate as cofactor. Is synthesized initially as an inactive proenzyme. Formation of the active enzyme involves a self-maturation process in which the active site pyruvoyl group is generated from an internal serine residue via an autocatalytic post-translational modification. Two non-identical subunits are generated from the proenzyme in this reaction, and the pyruvate is formed at the N-terminus of the alpha chain, which is derived from the carboxyl end of the proenzyme. The autoendoproteolytic cleavage occurs by a canonical serine protease mechanism, in which the side chain hydroxyl group of the serine supplies its oxygen atom to form the C-terminus of the beta chain, while the remainder of the serine residue undergoes an oxidative deamination to produce ammonia and the pyruvoyl prosthetic group on the alpha chain. During this reaction, the Ser that is part of the protease active site of the proenzyme becomes the pyruvoyl prosthetic group, which constitutes an essential element of the active site of the mature decarboxylase.

The protein localises to the cell membrane. The catalysed reaction is a 1,2-diacyl-sn-glycero-3-phospho-L-serine + H(+) = a 1,2-diacyl-sn-glycero-3-phosphoethanolamine + CO2. It functions in the pathway phospholipid metabolism; phosphatidylethanolamine biosynthesis; phosphatidylethanolamine from CDP-diacylglycerol: step 2/2. Catalyzes the formation of phosphatidylethanolamine (PtdEtn) from phosphatidylserine (PtdSer). The protein is Phosphatidylserine decarboxylase proenzyme of Pseudomonas aeruginosa (strain ATCC 15692 / DSM 22644 / CIP 104116 / JCM 14847 / LMG 12228 / 1C / PRS 101 / PAO1).